Here is a 436-residue protein sequence, read N- to C-terminus: D-amino acid dehydrogenase (436 aa).

3-17 (IVVLGAGVVGVTSAY) serves as a coordination point for FAD.

This sequence belongs to the DadA oxidoreductase family. FAD serves as cofactor.

It carries out the reaction a D-alpha-amino acid + A + H2O = a 2-oxocarboxylate + AH2 + NH4(+). Its pathway is amino-acid degradation; D-alanine degradation; NH(3) and pyruvate from D-alanine: step 1/1. Functionally, oxidative deamination of D-amino acids. The sequence is that of D-amino acid dehydrogenase from Cereibacter sphaeroides (strain ATCC 17023 / DSM 158 / JCM 6121 / CCUG 31486 / LMG 2827 / NBRC 12203 / NCIMB 8253 / ATH 2.4.1.) (Rhodobacter sphaeroides).